The following is a 183-amino-acid chain: Neuronal synaptobrevin (183 aa).

The span at 1 to 17 (MADAAPAGDAPPNAGAP) shows a compositional bias: low complexity. The interval 1–32 (MADAAPAGDAPPNAGAPAGEGGDGEIVGGPHN) is disordered. At 1–106 (MADAAPAGDA…KFWLQNLKMM (106 aa)) the chain is on the cytoplasmic side. The span at 18-27 (AGEGGDGEIV) shows a compositional bias: gly residues. The region spanning 41-101 (RLQQTQAQVD…GKLKRKFWLQ (61 aa)) is the v-SNARE coiled-coil homology domain. Residues 107-127 (IIMGVIGLVVVGIIANKLGLI) form a helical membrane-spanning segment. The Vesicular portion of the chain corresponds to 128-183 (GGEQPPQYQYPPQYMQPPPPPPQQPAGGQSSLVDAAGAGDGAGAGGSAGAGDHGGV). Positions 135–183 (YQYPPQYMQPPPPPPQQPAGGQSSLVDAAGAGDGAGAGGSAGAGDHGGV) are disordered. Residues 141 to 151 (YMQPPPPPPQQ) show a composition bias toward pro residues. Over residues 165–183 (AGDGAGAGGSAGAGDHGGV) the composition is skewed to gly residues.

It belongs to the synaptobrevin family. As to quaternary structure, part of the SNARE core complex containing Snap25 and syntaxin. Specifically expressed in neurons and synapses.

It is found in the cytoplasmic vesicle. The protein resides in the secretory vesicle. It localises to the synaptic vesicle membrane. The protein localises to the early endosome membrane. Its function is as follows. Involved in the targeting and/or fusion of transport vesicles to their target membrane. Major SNARE protein of synaptic vesicles which mediates fusion of synaptic vesicles to release neurotransmitters. Essential for fast vesicular exocytosis and activity-dependent neurotransmitter release as well as fast endocytosis that mediates rapid reuse of synaptic vesicles. Also involved in a neuron-specific sort-and-degrade mechanism that promotes endolysosomal degradation and is required for neuronal maintenance. The protein is Neuronal synaptobrevin of Drosophila melanogaster (Fruit fly).